We begin with the raw amino-acid sequence, 362 residues long: Probable protein phosphatase 2C 11 (362 aa).

Positions 23 to 329 (KLGLSSMQGW…DNMTMVLVQF (307 aa)) constitute a PPM-type phosphatase domain. Mn(2+) contacts are provided by D57, G58, D272, and D320.

The protein belongs to the PP2C family. Mg(2+) serves as cofactor. It depends on Mn(2+) as a cofactor.

It carries out the reaction O-phospho-L-seryl-[protein] + H2O = L-seryl-[protein] + phosphate. The catalysed reaction is O-phospho-L-threonyl-[protein] + H2O = L-threonyl-[protein] + phosphate. In Oryza sativa subsp. japonica (Rice), this protein is Probable protein phosphatase 2C 11.